We begin with the raw amino-acid sequence, 656 residues long: Protein teflon (656 aa).

A C2H2-type 1 zinc finger spans residues Leu33 to His56. The disordered stretch occupies residues Asp80 to Asn131. Over residues Ala89–Ser104 the composition is skewed to polar residues. 2 C2H2-type zinc fingers span residues Tyr606–His628 and Phe632–His655.

This sequence belongs to the Teflon family.

The protein resides in the nucleus. The protein localises to the chromosome. Specifically required in males for proper segregation of autosomal bivalents at meiosis I. Expression is required in the male germ line prior to spermatocyte stage S4. May have a role as a bridging molecule maintaining adhesion to hold autosome bivalents together via heterochromatic connections. This Drosophila sechellia (Fruit fly) protein is Protein teflon.